Here is a 229-residue protein sequence, read N- to C-terminus: PKHD-type hydroxylase BBta_3541 (229 aa).

Residues 78–180 (QIFPPLFNRY…RVASFFWMQS (103 aa)) form the Fe2OG dioxygenase domain. Fe cation-binding residues include H98, D100, and H161. Position 171 (R171) interacts with 2-oxoglutarate.

Fe(2+) serves as cofactor. It depends on L-ascorbate as a cofactor.

In Bradyrhizobium sp. (strain BTAi1 / ATCC BAA-1182), this protein is PKHD-type hydroxylase BBta_3541.